Here is a 1585-residue protein sequence, read N- to C-terminus: Sterol 3-beta-glucosyltransferase (1585 aa).

A compositionally biased stretch (pro residues) spans 1–18 (MSPPISPTPPPLQPPFPP). Disordered stretches follow at residues 1-154 (MSPP…CDFR), 177-225 (PWEE…PTHT), and 249-279 (YQYA…LPKG). Composition is skewed to polar residues over residues 65–77 (DQAT…SLIP), 105–123 (DAQT…STHE), and 132–148 (PRTS…QMAE). Acidic residues predominate over residues 178–194 (WEEDDDSDDGEDDDEFI). Residues 255 to 273 (ETSSRRTSAAGSESSSEGE) are compositionally biased toward low complexity. The GRAM 1 domain occupies 387-555 (ERLMEVFGLE…EAIVDVEKSP (169 aa)). The 93-residue stretch at 438-530 (LLVKSGPLHK…WVKAIQKVMF (93 aa)) folds into the PH domain. Disordered stretches follow at residues 625-645 (TSHA…LGMA) and 666-852 (DGEP…GSES). Residues 670 to 689 (LEEHSQGPHHNDEDASHLPH) are compositionally biased toward basic and acidic residues. Polar residues-rich tracts occupy residues 760–785 (TDSS…QASV), 806–817 (NKPSVVDSNSAE), and 827–840 (SWTS…QMVK). The GRAM 2 domain occupies 862–933 (RKFRTFFALS…RDLYGLKAQK (72 aa)). Ser1043, Arg1044, Asp1046, Ile1358, His1360, His1373, Gly1377, Thr1378, Asp1397, and Gln1398 together coordinate UDP-alpha-D-glucose. Positions 1499 to 1555 (NRVRSRSRSRSRSSQGRFSPRRHTVDDDGWSVVSGGSRSRSGSASAVTSPERRPLNI) are disordered. Low complexity predominate over residues 1529 to 1545 (SVVSGGSRSRSGSASAV).

Belongs to the glycosyltransferase 28 family.

The protein localises to the cytoplasm. It localises to the membrane. The enzyme catalyses a sterol + UDP-alpha-D-glucose = a sterol 3-beta-D-glucoside + UDP + H(+). It catalyses the reaction ergosterol + UDP-alpha-D-glucose = ergosteryl 3-beta-D-glucoside + UDP + H(+). Its function is as follows. Sterol glycosyltransferase responsible for the glycosylation of ergosterol to form ergosterol-glucoside. This Cryptococcus neoformans var. neoformans serotype D (strain JEC21 / ATCC MYA-565) (Filobasidiella neoformans) protein is Sterol 3-beta-glucosyltransferase.